A 379-amino-acid polypeptide reads, in one-letter code: Class V chitinase CHIT5b (379 aa).

A signal peptide spans 1–26 (MANILNLKHLLTLALILLALATKSST). The GH18 domain maps to 34 to 379 (RVKGIYWLEN…TQASKAWKLV (346 aa)). N-linked (GlcNAc...) asparagine glycosylation is found at Asn-68, Asn-109, and Asn-128. Glu-147 (proton donor) is an active-site residue. N-linked (GlcNAc...) asparagine glycans are attached at residues Asn-192, Asn-227, and Asn-241.

This sequence belongs to the glycosyl hydrolase 18 family. Chitinase class V subfamily.

The enzyme catalyses Random endo-hydrolysis of N-acetyl-beta-D-glucosaminide (1-&gt;4)-beta-linkages in chitin and chitodextrins.. It functions in the pathway glycan degradation; chitin degradation. Possesses chitinase activity in vitro toward glycol chitin, carboxymethyl-chitin, colloidal chitin, and the chitin oligosaccharides (N-acetylglucosamine) (GlcNAc)6 and (GlcNAc)5. Hydrolyzes (GlcNAc)6 into (GlcNAc)4 and (GlcNAc)2, or two (GlcNAc)3 molecules. Has the capacity to reduce hyphal growth of the fungus Trichoderma viride in an agar-plate bioassay. This is Class V chitinase CHIT5b from Medicago truncatula (Barrel medic).